A 27-amino-acid chain; its full sequence is Cupiennin-4b (27 aa).

Residue glutamine 27 is modified to Glutamine amide.

In terms of tissue distribution, expressed by the venom gland.

Its subcellular location is the secreted. This is Cupiennin-4b from Cupiennius salei (American wandering spider).